A 63-amino-acid polypeptide reads, in one-letter code: uncharacterized protein (63 aa).

Residues 20-40 (IVLLISFIFFFGRFIYSSVGA) traverse the membrane as a helical segment.

The protein localises to the membrane. This is an uncharacterized protein from Escherichia coli O157:H7.